The sequence spans 1315 residues: MDINDPSFSSTENGIYELLSRGYAAIEAATERDLKLPELGDIIGQVHAPEYISQVLSGWKPFYLRSVVNIPDRIFEQYNRTECFTQMGLFAEIQRAWITVDNRLFLWDYLSGQNFQAYEDLSHTIVNVKLVRPKANVFVSEIQHLLVIATSQEMLLLGVTIDEKTGELSFFSTGIQISVQGINVNCIVSSEDGRIFFSGNKDPNLYEFSYQLEEGWFSRRCSKINITGSVFDNFIPSFFSFGTHGDGIKQIAVDDSRSLLYVLRETSSVSCYELTKNGVNRCVFYSFSSMISQAQMLNATSPLLDPRTTQIVSIVPIPAYESQQIYCVAITSTGCRFYMRGGRGPISHYAPSNSTLSSTPPSTLQLTFVRFPPPMQVENYASSRNYPANPFFLQNQSTSQQQPERSSAVKTTPMKCSSLSNIYTSDLFFAISSSNTNEGDVVCCTAPEVGRIANAWQSGTQPSLIESSMYVPIKGFVQDIKCIQNSRERNELVSQFNTPPPTFAILTNTGVYVVVHRRPIDVLASAIRMGPSLSSGIDGQVQLFFESVGRAEGCATCLGIVSGCLDQGDFSHAAANFSGSTTKLAQADLLDIVKKYYIEFGGKAFIDQSRYNNQYDSSSLEFVRLSGCHDGLASSISRIIRNVWKNHVIIAKKMQNKRIHYAPAFNATEILKIQSGLLYLSTFLENNKSFIEGLNSPNTLIGSSNVADEIAVQAEHRALSALLLVLQQIVEGISFLLFLNDTGVSDFHEIVSSTSIDIQKSCSNMTFGEFFTSKRGREVTKELVNSLVNRHLQSGGNIDMVSQLLRKKCGSFCSADDVLIFKAVESLKKAKDTVDIEERQSLIELSYTLFKKAAHVFTPEDLRLAVEEYKSLNAYTTAVNLALHVASARDDRNQALSYLVDGMPENDPRREPFESRTKCYSYIFEILDSLESQMSNDSSAIKVDVYDTIQRSKDELFHYCFYDWYSFKGLTDRLIEIDSPYIQSYLERNSTKDMKIADLLWQYYAKREQYYQASIVLYDLATTHLAFSLEQRIEYLTRAKGFGSCHVPNSLRHKMNKVMLSVLEQLDVASIQDDVLIAIRGDMRIPTSKREELSKQLDGEIIPLSDLFNNYADPLGYGEICLSIFQCADYRGINEILNCWESIIKTTHENAIISPVGSSPVEAVSSTLKNLTLRFSQSENVFPIEQIIDITERYAFDQQGEAVATGWVIDTFLGAGVSHELIFIVLNQLYDRREKPWQGKDRLFFLIKEVTHLLKLWHEVSVRAGVAQTSKPSFDAPLVLEAIEKYKNALGAPDTATKSCKENLISLDSEIRQTY.

Belongs to the non-repetitive/WGA-negative nucleoporin family.

The protein localises to the cytoplasm. It localises to the nucleus. The chain is Probable nucleoporin C890.06 from Schizosaccharomyces pombe (strain 972 / ATCC 24843) (Fission yeast).